Reading from the N-terminus, the 242-residue chain is Tryptophan synthase alpha chain (242 aa).

Catalysis depends on proton acceptor residues Glu32 and Asp43.

The protein belongs to the TrpA family. Tetramer of two alpha and two beta chains.

The protein resides in the plastid. The protein localises to the chloroplast. It carries out the reaction (1S,2R)-1-C-(indol-3-yl)glycerol 3-phosphate + L-serine = D-glyceraldehyde 3-phosphate + L-tryptophan + H2O. It functions in the pathway amino-acid biosynthesis; L-tryptophan biosynthesis; L-tryptophan from chorismate: step 5/5. The alpha subunit is responsible for the aldol cleavage of indoleglycerol phosphate to indole and glyceraldehyde 3-phosphate. In Cyanidium caldarium (Red alga), this protein is Tryptophan synthase alpha chain.